The following is a 199-amino-acid chain: Adenylyl-sulfate kinase (199 aa).

The tract at residues 1–22 (MSESNHITWHDSEVTKKQRQHK) is disordered. 34–41 (GLSGSGKS) lines the ATP pocket. Ser-108 serves as the catalytic Phosphoserine intermediate.

This sequence belongs to the APS kinase family.

The catalysed reaction is adenosine 5'-phosphosulfate + ATP = 3'-phosphoadenylyl sulfate + ADP + H(+). It participates in sulfur metabolism; hydrogen sulfide biosynthesis; sulfite from sulfate: step 2/3. Its function is as follows. Catalyzes the synthesis of activated sulfate. This Staphylococcus epidermidis (strain ATCC 12228 / FDA PCI 1200) protein is Adenylyl-sulfate kinase.